Here is a 1894-residue protein sequence, read N- to C-terminus: 1,3-beta-glucan synthase component bgs2 (1894 aa).

Disordered stretches follow at residues 1–53 (MSWH…DSNK) and 282–310 (GPKIKQAKKKQKRKSNKAETEGTNEPETS). Over residues 32-51 (EFNNPGEESTYPQANSWNDS) the composition is skewed to polar residues. Basic residues predominate over residues 286-296 (KQAKKKQKRKS). 16 helical membrane passes run 530–550 (VSLGGAVATLLMLLATIFEWI), 566–586 (FLILILFFILNVAPTVFVFGF), 600–620 (VAIVHFIFSVFTFIYFSLVPL), 655–675 (VSWGLWLLVFGAKFTESYFFL), 710–730 (ILLGIMYVTDLVLFFLDTYLW), 731–751 (YILVNTVFSVARSFFLGISIW), 1338–1358 (IFIMLSVQLFMVVLVNLGGMY), 1394–1414 (CIISIFIVFFISFVPLTVQEL), 1476–1498 (LLFSRFAGPSIYLGSRTLLMLLF), 1503–1525 (VWIPHLIYFWISTLAMCISPFIF), 1598–1618 (FTEIFIPLMLVPLTLVSYFFI), 1637–1657 (ILILAFLPIIVAAVVSMTFAG), 1673–1693 (FGAVLAALAHGITVFMFIIVF), 1697–1717 (WYLEAWCLAKTVLSMLCIIAI), 1778–1798 (DFFLCHLLLFLMLPVLLIPFI), and 1837–1857 (TMFFLLLIAFLALIIIPLVVA).

Belongs to the glycosyltransferase 48 family. In terms of assembly, component of the 1,3-beta-glucan synthase (GS) complex, composed of at least the alternate catalytic subunits bgs1, bgs2, bgs3, and bgs4, and a regulatory subunit chr4.

Its subcellular location is the prospore membrane. It catalyses the reaction [(1-&gt;3)-beta-D-glucosyl](n) + UDP-alpha-D-glucose = [(1-&gt;3)-beta-D-glucosyl](n+1) + UDP + H(+). Functionally, alternate catalytic subunit of the 1,3-beta-glucan synthase (GS) complex. Synthesizes 1,3-beta-glucan, a major structural component of the yeast cell wall. Has a role in ascospore development where it is required for the assembly of a functional spore wall. The polypeptide is 1,3-beta-glucan synthase component bgs2 (Schizosaccharomyces pombe (strain 972 / ATCC 24843) (Fission yeast)).